The following is an 89-amino-acid chain: Small ribosomal subunit protein uS15 (89 aa).

This sequence belongs to the universal ribosomal protein uS15 family. Part of the 30S ribosomal subunit. Forms a bridge to the 50S subunit in the 70S ribosome, contacting the 23S rRNA.

Functionally, one of the primary rRNA binding proteins, it binds directly to 16S rRNA where it helps nucleate assembly of the platform of the 30S subunit by binding and bridging several RNA helices of the 16S rRNA. Forms an intersubunit bridge (bridge B4) with the 23S rRNA of the 50S subunit in the ribosome. In Salinispora tropica (strain ATCC BAA-916 / DSM 44818 / JCM 13857 / NBRC 105044 / CNB-440), this protein is Small ribosomal subunit protein uS15.